The sequence spans 154 residues: Superoxide dismutase [Cu-Zn] (154 aa).

Cu cation-binding residues include H47, H49, and H64. A disulfide bridge links C58 with C147. Zn(2+) is bound by residues H64, H72, H81, and D84. Position 121 (H121) interacts with Cu cation. R144 serves as a coordination point for substrate.

It belongs to the Cu-Zn superoxide dismutase family. In terms of assembly, homodimer. The cofactor is Cu cation. Zn(2+) is required as a cofactor.

It is found in the cytoplasm. It carries out the reaction 2 superoxide + 2 H(+) = H2O2 + O2. In terms of biological role, destroys radicals which are normally produced within the cells and which are toxic to biological systems. This Podospora anserina (Pleurage anserina) protein is Superoxide dismutase [Cu-Zn] (SOD1).